The following is a 491-amino-acid chain: Probable glycine dehydrogenase (decarboxylating) subunit 2 (491 aa).

K274 bears the N6-(pyridoxal phosphate)lysine mark.

It belongs to the GcvP family. C-terminal subunit subfamily. As to quaternary structure, the glycine cleavage system is composed of four proteins: P, T, L and H. In this organism, the P 'protein' is a heterodimer of two subunits. Requires pyridoxal 5'-phosphate as cofactor.

It carries out the reaction N(6)-[(R)-lipoyl]-L-lysyl-[glycine-cleavage complex H protein] + glycine + H(+) = N(6)-[(R)-S(8)-aminomethyldihydrolipoyl]-L-lysyl-[glycine-cleavage complex H protein] + CO2. Its function is as follows. The glycine cleavage system catalyzes the degradation of glycine. The P protein binds the alpha-amino group of glycine through its pyridoxal phosphate cofactor; CO(2) is released and the remaining methylamine moiety is then transferred to the lipoamide cofactor of the H protein. This chain is Probable glycine dehydrogenase (decarboxylating) subunit 2, found in Shouchella clausii (strain KSM-K16) (Alkalihalobacillus clausii).